Here is a 193-residue protein sequence, read N- to C-terminus: Flagellin B1 (193 aa).

A propeptide spanning residues 1–12 (MFEFITDEDERG) is cleaved from the precursor.

It belongs to the archaeal flagellin family. Post-translationally, glycosylated.

It localises to the archaeal flagellum. Flagellin is the subunit protein which polymerizes to form the filaments of archaeal flagella. This is Flagellin B1 (flaB1) from Halobacterium salinarum (strain ATCC 700922 / JCM 11081 / NRC-1) (Halobacterium halobium).